Reading from the N-terminus, the 154-residue chain is Proteinase inhibitor type-2 P303.51 (154 aa).

Positions 1–25 (MAVHKEVNFVAYLLIVLGLLVLVSA) are cleaved as a signal peptide. 2 tandem repeats follow at residues 31-87 (AKAC…DPKK) and 88-147 (PKAC…DEPK). Intrachain disulfides connect cysteine 34–cysteine 122, cysteine 38–cysteine 118, cysteine 46–cysteine 128, cysteine 58–cysteine 95, cysteine 61–cysteine 79, cysteine 62–cysteine 91, cysteine 68–cysteine 104, and cysteine 121–cysteine 139.

It belongs to the protease inhibitor I20 (potato type II proteinase inhibitor) family.

The protein is Proteinase inhibitor type-2 P303.51 of Solanum tuberosum (Potato).